Reading from the N-terminus, the 457-residue chain is Omega-hydroxypalmitate O-feruloyl transferase (457 aa).

Active-site proton acceptor residues include H184 and D404.

Belongs to the plant acyltransferase family. In terms of tissue distribution, expressed in roots, seedlings, leaves, stems, flowers and siliques. Detected at the protein level in roots and in seed coats.

It catalyses the reaction 16-hydroxyhexadecanoate + (E)-feruloyl-CoA = 16-feruloyloxyhexadecanoate + CoA. Involved in the synthesis of aromatics of the suberin polymer. Specifically affects the accumulation of the ferulate constituent of suberin in roots and seeds, but has no effect on the content of p-coumarate or sinapate. The sequence is that of Omega-hydroxypalmitate O-feruloyl transferase (HHT1) from Arabidopsis thaliana (Mouse-ear cress).